The primary structure comprises 200 residues: Dephospho-CoA kinase (200 aa).

Residues 3–200 (VIGLTGGIGS…KKYMTLAQGS (198 aa)) form the DPCK domain. 11 to 16 (GSGKTS) contributes to the ATP binding site.

The protein belongs to the CoaE family.

It is found in the cytoplasm. It catalyses the reaction 3'-dephospho-CoA + ATP = ADP + CoA + H(+). It participates in cofactor biosynthesis; coenzyme A biosynthesis; CoA from (R)-pantothenate: step 5/5. In terms of biological role, catalyzes the phosphorylation of the 3'-hydroxyl group of dephosphocoenzyme A to form coenzyme A. This is Dephospho-CoA kinase from Nitrosospira multiformis (strain ATCC 25196 / NCIMB 11849 / C 71).